A 622-amino-acid chain; its full sequence is ATP-dependent lipid A-core flippase (622 aa).

5 helical membrane-spanning segments follow: residues 32–52 (IVAA…LAAF), 91–111 (VWGT…LVVI), 192–212 (IVLL…FPLL), 286–306 (SPFS…IALW), and 312–332 (YTTI…YAPI). Residues 33 to 344 (VAALIAIFGV…LANISIPMQT (312 aa)) enclose the ABC transmembrane type-1 domain. Positions 378–611 (FRNVDVEYRS…NGYYTMLRNI (234 aa)) constitute an ABC transporter domain. 410 to 417 (GRSGSGKS) is an ATP binding site.

The protein belongs to the ABC transporter superfamily. Lipid exporter (TC 3.A.1.106) family. As to quaternary structure, homodimer.

The protein resides in the cell inner membrane. The catalysed reaction is ATP + H2O + lipid A-core oligosaccharideSide 1 = ADP + phosphate + lipid A-core oligosaccharideSide 2.. Functionally, involved in lipopolysaccharide (LPS) biosynthesis. Translocates lipid A-core from the inner to the outer leaflet of the inner membrane. Transmembrane domains (TMD) form a pore in the inner membrane and the ATP-binding domain (NBD) is responsible for energy generation. In Neisseria gonorrhoeae (strain ATCC 700825 / FA 1090), this protein is ATP-dependent lipid A-core flippase.